Here is a 214-residue protein sequence, read N- to C-terminus: Large ribosomal subunit protein uL3 (214 aa).

The segment at 131–155 is disordered; it reads GAQRTSHGNSRSHRVPGSIGMAQDP. At Gln-153 the chain carries N5-methylglutamine.

Belongs to the universal ribosomal protein uL3 family. As to quaternary structure, part of the 50S ribosomal subunit. Forms a cluster with proteins L14 and L19. Methylated by PrmB.

Functionally, one of the primary rRNA binding proteins, it binds directly near the 3'-end of the 23S rRNA, where it nucleates assembly of the 50S subunit. The sequence is that of Large ribosomal subunit protein uL3 from Neisseria gonorrhoeae (strain ATCC 700825 / FA 1090).